A 44-amino-acid polypeptide reads, in one-letter code: Cuticle protein CP466 (44 aa).

A run of 2 repeats spans residues 3 to 20 (LLEG…KKYL) and 27 to 44 (VLLT…NVQF).

Calcified shell.

The sequence is that of Cuticle protein CP466 from Cancer pagurus (Rock crab).